Here is a 341-residue protein sequence, read N- to C-terminus: Mediator of RNA polymerase II transcription subunit 18 (341 aa).

A disordered region spans residues 139–216; the sequence is KVMDKEKVQS…KEHSEGNASQ (78 aa). Over residues 163–211 the composition is skewed to basic and acidic residues; it reads EDKKENIKKEESGEEVKGSGEEVKGSGEEVKGSGEEAKKSGEEAKEHSE.

It belongs to the Mediator complex subunit 18 family. In terms of assembly, component of the Mediator complex.

The protein localises to the nucleus. Functionally, component of the Mediator complex, a coactivator involved in the regulated transcription of nearly all RNA polymerase II-dependent genes. Mediator functions as a bridge to convey information from gene-specific regulatory proteins to the basal RNA polymerase II transcription machinery. Mediator is recruited to promoters by direct interactions with regulatory proteins and serves as a scaffold for the assembly of a functional preinitiation complex with RNA polymerase II and the general transcription factors. The sequence is that of Mediator of RNA polymerase II transcription subunit 18 (SRB5) from Debaryomyces hansenii (strain ATCC 36239 / CBS 767 / BCRC 21394 / JCM 1990 / NBRC 0083 / IGC 2968) (Yeast).